We begin with the raw amino-acid sequence, 438 residues long: Cell division cycle-associated 7-like protein (438 aa).

The Integrase domain-binding motif 1 (IBM1) motif lies at 9–33; it reads IPKEVADIFNAPSDDEEFVGFQDDV. A Phosphoserine modification is found at S21. The segment at 55–114 is PSIP1-binding; sequence ACLHSKYFTEELRRIFKEDTDSDNEDFEGFTESELNIGSNPELIESELSDGDKTHPMMSD. The short motif at 62–88 is the Integrase domain-binding motif 2 (IBM2) element; that stretch reads FTEELRRIFKEDTDSDNEDFEGFTESE. The tract at residues 72 to 199 is disordered; it reads EDTDSDNEDF…ESRAESQETS (128 aa). T74 carries the post-translational modification Phosphothreonine. Residues 74–85 are compositionally biased toward acidic residues; it reads TDSDNEDFEGFT. S76 carries the post-translational modification Phosphoserine. Phosphothreonine is present on T85. S100, S103, S113, S135, S136, S183, and S185 each carry phosphoserine. Positions 113 to 123 are enriched in acidic residues; sequence SDEEDDDDEEE. Positions 166 to 183 are enriched in basic and acidic residues; the sequence is TDLRREKSCRQPKEKEDS. The tract at residues 201 to 223 is MYC-binding; sequence ALLKRAMNIKENKAMLAQLLAEL. Glycyl lysine isopeptide (Lys-Gly) (interchain with G-Cter in SUMO2) cross-links involve residues K210 and K213. S249 carries the phosphoserine modification.

As to quaternary structure, interacts with MYC. Interacts (via IBM motifs) with PSIP1 (via IBD domain); phosphorylation increases its affinity for PSIP1. In terms of processing, phosphorylation increases its interaction with PSIP1.

Its subcellular location is the cytoplasm. It localises to the nucleus. Its function is as follows. Plays a role in transcriptional regulation as a repressor that inhibits monoamine oxidase A (MAOA) activity and gene expression by binding to the promoter. Plays an important oncogenic role in mediating the full transforming effect of MYC in medulloblastoma cells. Involved in apoptotic signaling pathways; May act downstream of P38-kinase and BCL-2, but upstream of CASP3/caspase-3 as well as CCND1/cyclin D1 and E2F1. The protein is Cell division cycle-associated 7-like protein (Cdca7l) of Rattus norvegicus (Rat).